A 772-amino-acid polypeptide reads, in one-letter code: Putative ribosomal protein S6 kinase alpha-2 (772 aa).

Residues 17 to 284 (FALLRVLGKG…VDEIKNHKFM (268 aa)) enclose the Protein kinase 1 domain. ATP contacts are provided by residues 23–31 (LGKGAYGKV) and Lys-49. Asp-145 (proton acceptor) is an active-site residue. Ser-180, Ser-342, and Ser-347 each carry phosphoserine; by autocatalysis. One can recognise an AGC-kinase C-terminal domain in the interval 285–353 (SSIDWDAAVK…VSPSVIFAND (69 aa)). The Protein kinase 2 domain maps to 382–653 (KSDAGLLGKG…MQELTAHMWL (272 aa)). Residues 388–396 (LGKGAFSVV) and Lys-411 each bind ATP. Asp-500 (proton acceptor) is an active-site residue. Residues 706-772 (RGIKRQSGDK…IRETRGSDSS (67 aa)) form a disordered region. Ser-712 bears the Phosphoserine; by autocatalysis mark. Polar residues-rich tracts occupy residues 718–727 (SGNSKNSRVT) and 739–748 (EMTSSTSRPS).

It belongs to the protein kinase superfamily. AGC Ser/Thr protein kinase family. S6 kinase subfamily. It depends on Mg(2+) as a cofactor.

The enzyme catalyses L-seryl-[protein] + ATP = O-phospho-L-seryl-[protein] + ADP + H(+). The catalysed reaction is L-threonyl-[protein] + ATP = O-phospho-L-threonyl-[protein] + ADP + H(+). With respect to regulation, activated by multiple phosphorylations on threonine and serine residues. In terms of biological role, serine/threonine kinase that may play a role in mediating the mitogen- and stress-induced effects on transcription. May repress transcription via phosphorylation of 'Ser-1' of histone H2A. May phosphorylate histone H3. The sequence is that of Putative ribosomal protein S6 kinase alpha-2 (rskn-2) from Caenorhabditis elegans.